The following is a 740-amino-acid chain: ATP-dependent RNA helicase DBP7 (740 aa).

Residues 1 to 104 are disordered; that stretch reads MSFNDDDDGM…SNVEQPARVT (104 aa). Residues 13 to 25 show a composition bias toward polar residues; that stretch reads NFTTDVSDASETV. Residues 43–60 are compositionally biased toward basic and acidic residues; sequence MMMEGRKPRVRGEKRPLE. The span at 72 to 81 shows a compositional bias: polar residues; that stretch reads ASSSNSTSAQ. The Q motif motif lies at 149 to 178; it reads DTFDSFGITDTMVSHLNVKMKISKPTKIQK. Residues 182–376 form the Helicase ATP-binding domain; sequence PPFLQAQNDL…NVTLQNYKLI (195 aa). 195–202 provides a ligand contact to ATP; that stretch reads AQTGSGKT. The short motif at 311 to 314 is the DEAD box element; the sequence is DEGD. One can recognise a Helicase C-terminal domain in the interval 414–607; that stretch reads TITQKHYKEG…VLRPAFEGLN (194 aa). A disordered region spans residues 695 to 721; sequence SMGLQQGKAGAAAAASQKKPKEDSKSK. Residues 697–711 show a composition bias toward low complexity; it reads GLQQGKAGAAAAASQ.

This sequence belongs to the DEAD box helicase family. DDX31/DBP7 subfamily.

The protein localises to the nucleus. It localises to the nucleolus. The catalysed reaction is ATP + H2O = ADP + phosphate + H(+). Its function is as follows. ATP-binding RNA helicase involved in the biogenesis of 60S ribosomal subunits and is required for the normal formation of 25S and 5.8S rRNAs. This is ATP-dependent RNA helicase DBP7 (DBP7) from Kluyveromyces lactis (strain ATCC 8585 / CBS 2359 / DSM 70799 / NBRC 1267 / NRRL Y-1140 / WM37) (Yeast).